Consider the following 205-residue polypeptide: Phospholipase D (205 aa).

An N-terminal signal peptide occupies residues 1–22 (MKSKNNKFIAVSISFILGIALG). In terms of domain architecture, PLD phosphodiesterase spans 142–169 (VPGIAHNKVIIIDKKKVITGSFNFTVSA). Residues histidine 147, lysine 149, and aspartate 154 contribute to the active site.

The protein belongs to the phospholipase D family. Homodimer.

The protein localises to the secreted. The catalysed reaction is a 1,2-diacyl-sn-glycero-3-phosphocholine + H2O = a 1,2-diacyl-sn-glycero-3-phosphate + choline + H(+). In terms of biological role, could be a virulence factor. This is Phospholipase D (pld) from Rickettsia prowazekii (strain Madrid E).